A 599-amino-acid polypeptide reads, in one-letter code: MTSISAKLRFLILIIIDSFIVTFSVFLGYAILEPYFKGYSIDLLVLSSVILLVSHHIFAYVFNLYHRAWEYASVSELMSVLKAVTSSIVVTLLLVSLLISESPFLRLYFITWMMHLLLIGGSRLFWRVYRRYFIDNAVEKKATLVVGAGQGGSVLIREMLRSQDMRMQPVLAVDDDKNKQKMTITERVKVQGYVEDIPELVKKFRIKKIIIAIPTLSQKRLNEINKICNIEGVELFKMPNIEDVLSGELEVNNLKKVEVEDLLGRDPVELDMALISRELTNKTILVTGAGGSIGSEICRQVSKFDPQKIILLGHGENSIYSIHQELSKTYGNRIEFVPVIADVQNKTRILEVMNEFKPYAVYHAAAHKHVPLMEYNPHEAIRNNILGTKNVAESAKEGEVSKFVMISTDKAVNPSNVMGATKRIAEMVIQSLNEDNSKTSFVAVRFGNVLGSRGSVIPLFKNQIESGGPVTVTHPEMTRYFMTIPEASRLVLQAGALAQGGEVFVLDMGKPVKIVDLAKNLIRLSGKKEEDIGIEFSGIRPGEKLYEELLNKNEIHPQQVYEKIYRGKVDHYIKTEVDLIVEDLINNFSKEKLLKIANR.

4 helical membrane passes run 12–32, 41–61, 79–99, and 102–122; these read ILII…YAIL, IDLL…FAYV, SVLK…SLLI, and SPFL…IGGS.

It belongs to the polysaccharide synthase family.

It localises to the cell membrane. Its pathway is capsule biogenesis; capsule polysaccharide biosynthesis. Its function is as follows. Required for the biosynthesis of type 1 capsular polysaccharide. The sequence is that of Capsular polysaccharide biosynthesis protein CapD (capD) from Staphylococcus aureus.